The following is a 138-amino-acid chain: Nanos homolog 2 (138 aa).

The tract at residues E31 to A55 is disordered. The Nanos-type zinc-finger motif lies at L62 to L116. Zn(2+)-binding residues include C63, C66, H79, C90, C98, C101, H109, and C114. 2 consecutive short sequence motifs (C2HC) follow at residues C63–C90 and C98–C114.

This sequence belongs to the nanos family. In terms of assembly, interacts with CNOT1, CNOT3, CNOT6L, CNOT7 and CNOT9. Testis and ovary. Expression found in several spermatogenic stages: in cells on the periphery of the tubules which could correspond to spermatogonia, in spermatocytes and in round spermatids (at protein level).

The protein localises to the cytoplasm. The protein resides in the P-body. Its subcellular location is the perinuclear region. Its function is as follows. Plays a key role in the sexual differentiation of germ cells by promoting the male fate but suppressing the female fate. Represses the female fate pathways by suppressing meiosis, which in turn results in the promotion of the male fate. Maintains the suppression of meiosis by preventing STRA8 expression, which is required for premeiotic DNA replication, after CYP26B1 is decreased. Regulates the localization of the CCR4-NOT deadenylation complex to P-bodies and plays a role in recruiting the complex to trigger the degradation of mRNAs involved in meiosis. Required for the maintenance of the spermatogonial stem cell population. Not essential for the assembly of P-bodies but is required for the maintenance of their normal state. In Homo sapiens (Human), this protein is Nanos homolog 2 (NANOS2).